Here is a 178-residue protein sequence, read N- to C-terminus: Adenine phosphoribosyltransferase (178 aa).

This sequence belongs to the purine/pyrimidine phosphoribosyltransferase family. Homodimer.

The protein localises to the cytoplasm. The enzyme catalyses AMP + diphosphate = 5-phospho-alpha-D-ribose 1-diphosphate + adenine. It functions in the pathway purine metabolism; AMP biosynthesis via salvage pathway; AMP from adenine: step 1/1. Catalyzes a salvage reaction resulting in the formation of AMP, that is energically less costly than de novo synthesis. The polypeptide is Adenine phosphoribosyltransferase (Novosphingobium aromaticivorans (strain ATCC 700278 / DSM 12444 / CCUG 56034 / CIP 105152 / NBRC 16084 / F199)).